Reading from the N-terminus, the 360-residue chain is Phospho-N-acetylmuramoyl-pentapeptide-transferase (360 aa).

A run of 10 helical transmembrane segments spans residues 24–44 (RAVM…PWTI), 69–89 (GTPT…TLLW), 92–112 (WANP…ALGF), 133–153 (MVWQ…LAAN), 158–178 (ILIV…GFLV), 199–219 (GLAT…AYAS), 239–259 (VVIF…FNAY), 263–283 (VFMG…VAVI), 288–308 (FVLV…MLQV), and 337–357 (QVVV…LSTL).

Belongs to the glycosyltransferase 4 family. MraY subfamily. Requires Mg(2+) as cofactor.

It localises to the cell inner membrane. The enzyme catalyses UDP-N-acetyl-alpha-D-muramoyl-L-alanyl-gamma-D-glutamyl-meso-2,6-diaminopimeloyl-D-alanyl-D-alanine + di-trans,octa-cis-undecaprenyl phosphate = di-trans,octa-cis-undecaprenyl diphospho-N-acetyl-alpha-D-muramoyl-L-alanyl-D-glutamyl-meso-2,6-diaminopimeloyl-D-alanyl-D-alanine + UMP. It functions in the pathway cell wall biogenesis; peptidoglycan biosynthesis. Its function is as follows. Catalyzes the initial step of the lipid cycle reactions in the biosynthesis of the cell wall peptidoglycan: transfers peptidoglycan precursor phospho-MurNAc-pentapeptide from UDP-MurNAc-pentapeptide onto the lipid carrier undecaprenyl phosphate, yielding undecaprenyl-pyrophosphoryl-MurNAc-pentapeptide, known as lipid I. The sequence is that of Phospho-N-acetylmuramoyl-pentapeptide-transferase from Neisseria meningitidis serogroup A / serotype 4A (strain DSM 15465 / Z2491).